The sequence spans 874 residues: Coatomer subunit gamma-1 (874 aa).

The span at 1–11 (MLKKFDKKDEE) shows a compositional bias: basic and acidic residues. A disordered region spans residues 1–21 (MLKKFDKKDEESGGGSNPFQH). 4 HEAT repeats span residues 64–101 (TEAT…IAED), 283–320 (KELA…KHPS), 322–355 (VTAC…GSEG), and 356–392 (SIDR…KYPR). Threonine 594 bears the Phosphothreonine mark. Positions 609 to 874 (RQEIFQEQLA…PVDIVLASVG (266 aa)) are interaction with ZNF289/ARFGAP2.

Belongs to the COPG family. In terms of assembly, oligomeric complex that consists of at least the alpha, beta, beta', gamma, delta, epsilon and zeta subunits. Interacts with ZNF289/ARFGAP2 through its C-terminal appendage domain. Interacts with EGFR upon EGF treatment; interaction is essential for regulation of EGF-dependent nuclear transport of EGFR by retrograde trafficking from the Golgi to the ER. The coatomer interacts with KDEL receptors; the interaction is important for retrograde trafficking of KDEL-bearing proteins from the Golgi to the endoplasmic reticulum. Interacts with COPB1. Interacts with TMED10 (via C-terminus). Interacts with TMED2, TMED3, TMED7 and TMED9.

It is found in the cytoplasm. The protein localises to the cytosol. It localises to the golgi apparatus membrane. The protein resides in the cytoplasmic vesicle. Its subcellular location is the COPI-coated vesicle membrane. In terms of biological role, the coatomer is a cytosolic protein complex that binds to dilysine motifs and reversibly associates with Golgi non-clathrin-coated vesicles, which further mediate biosynthetic protein transport from the ER, via the Golgi up to the trans Golgi network. Coatomer complex is required for budding from Golgi membranes, and is essential for the retrograde Golgi-to-ER transport of dilysine-tagged proteins. In mammals, the coatomer can only be recruited by membranes associated to ADP-ribosylation factors (ARFs), which are small GTP-binding proteins; the complex also influences the Golgi structural integrity, as well as the processing, activity, and endocytic recycling of LDL receptors. Required for limiting lipid storage in lipid droplets. Involved in lipid homeostasis by regulating the presence of perilipin family members PLIN2 and PLIN3 at the lipid droplet surface and promoting the association of adipocyte triglyceride lipase (PNPLA2) with the lipid droplet surface to mediate lipolysis. The polypeptide is Coatomer subunit gamma-1 (COPG1) (Bos taurus (Bovine)).